Consider the following 223-residue polypeptide: Endonuclease NucS (223 aa).

The protein belongs to the NucS endonuclease family.

It is found in the cytoplasm. In terms of biological role, cleaves both 3' and 5' ssDNA extremities of branched DNA structures. The chain is Endonuclease NucS from Streptomyces avermitilis (strain ATCC 31267 / DSM 46492 / JCM 5070 / NBRC 14893 / NCIMB 12804 / NRRL 8165 / MA-4680).